The sequence spans 339 residues: Photosystem II assembly lipoprotein Ycf48 (339 aa).

Residues 1-23 (MNRLIKFSFNLILIFVLGLGLSG) form the signal peptide. C24 carries N-palmitoyl cysteine lipidation. C24 is lipidated: S-diacylglycerol cysteine.

Belongs to the Ycf48 family. Part of early PSII assembly complexes which includes D1 (psbA) and PsbI; not found in mature PSII. Binds to the lumenal side of PSII complexes. Interacts with YidC.

It localises to the cellular thylakoid membrane. In terms of biological role, a factor required for optimal assembly of photosystem II (PSII), acting in the early stages of PSII assembly. Also plays a role in replacement of photodamaged D1 (psbA). Assists YidC in synthesis of chlorophyll-binding proteins. The polypeptide is Photosystem II assembly lipoprotein Ycf48 (Prochlorococcus marinus (strain SARG / CCMP1375 / SS120)).